The following is an 85-amino-acid chain: Toxin AahP1005 (85 aa).

The signal sequence occupies residues 1–19 (MNYLVMISLALLFMTGVES). The LCN-type CS-alpha/beta domain occupies 21-83 (KDGYIVDDKN…VSTKKKGGCN (63 aa)). Disulfide bonds link Cys31–Cys82, Cys35–Cys55, Cys41–Cys65, and Cys45–Cys67. Asn83 is modified (asparagine amide).

The protein belongs to the long (4 C-C) scorpion toxin superfamily. Sodium channel inhibitor family. Alpha subfamily. In terms of tissue distribution, expressed by the venom gland.

Its subcellular location is the secreted. Functionally, alpha toxins bind voltage-independently at site-3 of sodium channels (Nav) and inhibit the inactivation of the activated channels, thereby blocking neuronal transmission. In Androctonus australis (Sahara scorpion), this protein is Toxin AahP1005.